A 70-amino-acid polypeptide reads, in one-letter code: Myotoxin (70 aa).

The signal sequence occupies residues 1–22; that stretch reads MKILYLLFAFLFLAFLSEPGNA. 3 disulfides stabilise this stretch: cysteine 26-cysteine 58, cysteine 33-cysteine 52, and cysteine 40-cysteine 59.

The protein belongs to the crotamine-myotoxin family. In terms of assembly, monomer. Expressed by the venom gland.

It is found in the secreted. Functionally, cationic peptide that possesses multiple functions. It acts as a cell-penetrating peptide (CPP), and as a potent voltage-gated potassium channel (Kv) inhibitor. It exhibits antimicrobial activities, hind limb paralysis, and severe muscle necrosis by a non-enzymatic mechanism. This chain is Myotoxin, found in Crotalus adamanteus (Eastern diamondback rattlesnake).